The primary structure comprises 245 residues: Small ribosomal subunit protein uS3 (245 aa).

One can recognise a KH type-2 domain in the interval 21–92; it reads LNEFLTRELA…SVELYAEKVA (72 aa). The disordered stretch occupies residues 215–245; it reads EEILPTTPVSEQKGAKPEVPVMPQGAPVPTA.

This sequence belongs to the universal ribosomal protein uS3 family.

It localises to the cytoplasm. The protein localises to the nucleus. Its subcellular location is the nucleolus. It is found in the mitochondrion inner membrane. The protein resides in the cytoskeleton. It localises to the spindle. It catalyses the reaction 2'-deoxyribonucleotide-(2'-deoxyribose 5'-phosphate)-2'-deoxyribonucleotide-DNA = a 3'-end 2'-deoxyribonucleotide-(2,3-dehydro-2,3-deoxyribose 5'-phosphate)-DNA + a 5'-end 5'-phospho-2'-deoxyribonucleoside-DNA + H(+). Functionally, component of the small ribosomal subunit. The ribosome is a large ribonucleoprotein complex responsible for the synthesis of proteins in the cell. Has endonuclease activity and plays a role in repair of damaged DNA. Also involved in other processes including regulation of transcription, translation of its cognate mRNA, spindle formation and chromosome movement during mitosis, and apoptosis. The polypeptide is Small ribosomal subunit protein uS3 (rps3) (Ictalurus punctatus (Channel catfish)).